We begin with the raw amino-acid sequence, 56 residues long: Small ribosomal subunit protein uS14 (56 aa).

Residues C21, C24, C39, and C42 each contribute to the Zn(2+) site.

It belongs to the universal ribosomal protein uS14 family. In terms of assembly, component of the 40S small ribosomal subunit. It depends on Zn(2+) as a cofactor.

It is found in the cytoplasm. Its subcellular location is the cytosol. The protein resides in the rough endoplasmic reticulum. The chain is Small ribosomal subunit protein uS14 (RpS29) from Bombyx mori (Silk moth).